Consider the following 575-residue polypeptide: 2-succinyl-5-enolpyruvyl-6-hydroxy-3-cyclohexene-1-carboxylate synthase (575 aa).

This sequence belongs to the TPP enzyme family. MenD subfamily. In terms of assembly, homodimer. Requires Mg(2+) as cofactor. The cofactor is Mn(2+). It depends on thiamine diphosphate as a cofactor.

The catalysed reaction is isochorismate + 2-oxoglutarate + H(+) = 5-enolpyruvoyl-6-hydroxy-2-succinyl-cyclohex-3-ene-1-carboxylate + CO2. It participates in quinol/quinone metabolism; 1,4-dihydroxy-2-naphthoate biosynthesis; 1,4-dihydroxy-2-naphthoate from chorismate: step 2/7. It functions in the pathway quinol/quinone metabolism; menaquinone biosynthesis. Catalyzes the thiamine diphosphate-dependent decarboxylation of 2-oxoglutarate and the subsequent addition of the resulting succinic semialdehyde-thiamine pyrophosphate anion to isochorismate to yield 2-succinyl-5-enolpyruvyl-6-hydroxy-3-cyclohexene-1-carboxylate (SEPHCHC). The protein is 2-succinyl-5-enolpyruvyl-6-hydroxy-3-cyclohexene-1-carboxylate synthase of Syntrophus aciditrophicus (strain SB).